Consider the following 404-residue polypeptide: Coenzyme F(430) synthetase (404 aa).

112–117 (GVKGKT) serves as a coordination point for ATP.

It belongs to the MurCDEF family.

The enzyme catalyses 15,17(3)-seco-F430-17(3)-acid + ATP = coenzyme F430 + ADP + phosphate. Its function is as follows. Involved in the biosynthesis of the unique nickel-containing tetrapyrrole coenzyme F430, the prosthetic group of methyl-coenzyme M reductase (MCR), which plays a key role in methanogenesis and anaerobic methane oxidation. Catalyzes the activation the g-propionate side chain of 15,17(3)-seco-F430-17(3)-acid (seco-F430) for intramolecular C-C bond formation to yield the carbocyclic F ring of coenzyme F430. The chain is Coenzyme F(430) synthetase from Methanocaldococcus jannaschii (strain ATCC 43067 / DSM 2661 / JAL-1 / JCM 10045 / NBRC 100440) (Methanococcus jannaschii).